Consider the following 595-residue polypeptide: UvrABC system protein C (595 aa).

The GIY-YIG domain occupies 14–91; that stretch reads SNPGCYLHKD…IQENMPKFNI (78 aa). Positions 196 to 231 constitute a UVR domain; the sequence is DKIVNQLKAKMKDMSDQMEFERAAEYRDLIEAVSTL.

It belongs to the UvrC family. In terms of assembly, interacts with UvrB in an incision complex.

The protein resides in the cytoplasm. In terms of biological role, the UvrABC repair system catalyzes the recognition and processing of DNA lesions. UvrC both incises the 5' and 3' sides of the lesion. The N-terminal half is responsible for the 3' incision and the C-terminal half is responsible for the 5' incision. This is UvrABC system protein C from Streptococcus thermophilus (strain CNRZ 1066).